A 350-amino-acid polypeptide reads, in one-letter code: RNA 3'-terminal phosphate cyclase (350 aa).

ATP contacts are provided by residues Gln100 and 290 to 294; that span reads FLGDQ. His314 (tele-AMP-histidine intermediate) is an active-site residue.

It belongs to the RNA 3'-terminal cyclase family. Type 1 subfamily.

It is found in the cytoplasm. It catalyses the reaction a 3'-end 3'-phospho-ribonucleotide-RNA + ATP = a 3'-end 2',3'-cyclophospho-ribonucleotide-RNA + AMP + diphosphate. Functionally, catalyzes the conversion of 3'-phosphate to a 2',3'-cyclic phosphodiester at the end of RNA. The mechanism of action of the enzyme occurs in 3 steps: (A) adenylation of the enzyme by ATP; (B) transfer of adenylate to an RNA-N3'P to produce RNA-N3'PP5'A; (C) and attack of the adjacent 2'-hydroxyl on the 3'-phosphorus in the diester linkage to produce the cyclic end product. The biological role of this enzyme is unknown but it is likely to function in some aspects of cellular RNA processing. The sequence is that of RNA 3'-terminal phosphate cyclase from Thermococcus sibiricus (strain DSM 12597 / MM 739).